Reading from the N-terminus, the 208-residue chain is Large ribosomal subunit protein bL25 (208 aa).

Belongs to the bacterial ribosomal protein bL25 family. CTC subfamily. In terms of assembly, part of the 50S ribosomal subunit; part of the 5S rRNA/L5/L18/L25 subcomplex. Contacts the 5S rRNA. Binds to the 5S rRNA independently of L5 and L18.

Its function is as follows. This is one of the proteins that binds to the 5S RNA in the ribosome where it forms part of the central protuberance. The polypeptide is Large ribosomal subunit protein bL25 (Bartonella quintana (strain Toulouse) (Rochalimaea quintana)).